The primary structure comprises 1872 residues: Ral GTPase-activating protein subunit alpha-2 (1872 aa).

The interval 350–370 (DGAGSTEQDKSHSNSSTLSDR) is disordered. Phosphoserine occurs at positions 373, 376, and 379. Residues 445–469 (PDKKDVAQEDADKLGLSETDSKEAS) are compositionally biased toward basic and acidic residues. Positions 445 to 481 (PDKKDVAQEDADKLGLSETDSKEASSESSGHKRSSSW) are disordered. S486 is subject to Phosphoserine. S696 is modified (phosphoserine; by PKB). Disordered stretches follow at residues 711–730 (FRSATTSGAPGVEKARNTVR) and 758–813 (QQVP…GITM). The residue at position 715 (T715) is a Phosphothreonine; by PKB. Composition is skewed to polar residues over residues 758–768 (QQVPRSSSTSD) and 775–795 (SDSSQGQKVEHSQNLSSSEPK). Over residues 796 to 810 (SVQESKGHVTHEHEG) the composition is skewed to basic and acidic residues. Phosphoserine occurs at positions 819 and 820. The segment at 831 to 851 (QQAHGRCRQRQTSESTGSDTV) is disordered. Polar residues predominate over residues 840–849 (RQTSESTGSD). S1592 carries the post-translational modification Phosphoserine. The region spanning 1634-1842 (LKNLDSRQCR…EERALYLEAI (209 aa)) is the Rap-GAP domain.

As to quaternary structure, component of the heterodimeric RalGAP2 complex with RALGAPB. Heterodimerization is required for activity. In terms of tissue distribution, abundantly expressed in testis, pancreas, lung, thymus, brown fat, and white fat.

The protein resides in the cytoplasm. Catalytic subunit of the heterodimeric RalGAP2 complex which acts as a GTPase activator for the Ras-like small GTPases RALA and RALB. This chain is Ral GTPase-activating protein subunit alpha-2 (Ralgapa2), found in Mus musculus (Mouse).